A 212-amino-acid polypeptide reads, in one-letter code: MKLDVINLDGGKAGSVDLDDAIFGIADIRGDILQRVVTWQLAKRRSGNHKIQVRNEVSRTGKKMYKQKGTGSARHGSRRAAQFVGGAKAHGPVVRSHAFDLPKKIRAMALRHALSSKAKSGSIIVLDTAVLTDPKTAALRANFDKIGLKNALVIAGPEVDGNFKLAARNIPNIDVLPNAGLNVYDVLRRHTLVLTKDAVEAISARFAEKEAA.

It belongs to the universal ribosomal protein uL4 family. As to quaternary structure, part of the 50S ribosomal subunit.

One of the primary rRNA binding proteins, this protein initially binds near the 5'-end of the 23S rRNA. It is important during the early stages of 50S assembly. It makes multiple contacts with different domains of the 23S rRNA in the assembled 50S subunit and ribosome. In terms of biological role, forms part of the polypeptide exit tunnel. The sequence is that of Large ribosomal subunit protein uL4 from Caulobacter sp. (strain K31).